The primary structure comprises 469 residues: 3-isopropylmalate dehydratase large subunit (469 aa).

Residues C349, C410, and C413 each contribute to the [4Fe-4S] cluster site.

Belongs to the aconitase/IPM isomerase family. LeuC type 1 subfamily. Heterodimer of LeuC and LeuD. [4Fe-4S] cluster is required as a cofactor.

The enzyme catalyses (2R,3S)-3-isopropylmalate = (2S)-2-isopropylmalate. The protein operates within amino-acid biosynthesis; L-leucine biosynthesis; L-leucine from 3-methyl-2-oxobutanoate: step 2/4. Catalyzes the isomerization between 2-isopropylmalate and 3-isopropylmalate, via the formation of 2-isopropylmaleate. The polypeptide is 3-isopropylmalate dehydratase large subunit (Neisseria meningitidis serogroup C / serotype 2a (strain ATCC 700532 / DSM 15464 / FAM18)).